The primary structure comprises 479 residues: Bifunctional protein HldE (479 aa).

The segment at 1 to 319 (MTVILPDFLK…NVVQKYEYTK (319 aa)) is ribokinase. An ATP-binding site is contributed by 195-198 (NMSE). The active site involves D264. A cytidylyltransferase region spans residues 346–479 (MTNGVFDILH…IDTMEINEIN (134 aa)).

The protein in the N-terminal section; belongs to the carbohydrate kinase PfkB family. It in the C-terminal section; belongs to the cytidylyltransferase family. As to quaternary structure, homodimer.

It carries out the reaction D-glycero-beta-D-manno-heptose 7-phosphate + ATP = D-glycero-beta-D-manno-heptose 1,7-bisphosphate + ADP + H(+). The catalysed reaction is D-glycero-beta-D-manno-heptose 1-phosphate + ATP + H(+) = ADP-D-glycero-beta-D-manno-heptose + diphosphate. It functions in the pathway nucleotide-sugar biosynthesis; ADP-L-glycero-beta-D-manno-heptose biosynthesis; ADP-L-glycero-beta-D-manno-heptose from D-glycero-beta-D-manno-heptose 7-phosphate: step 1/4. It participates in nucleotide-sugar biosynthesis; ADP-L-glycero-beta-D-manno-heptose biosynthesis; ADP-L-glycero-beta-D-manno-heptose from D-glycero-beta-D-manno-heptose 7-phosphate: step 3/4. Its function is as follows. Catalyzes the phosphorylation of D-glycero-D-manno-heptose 7-phosphate at the C-1 position to selectively form D-glycero-beta-D-manno-heptose-1,7-bisphosphate. Catalyzes the ADP transfer from ATP to D-glycero-beta-D-manno-heptose 1-phosphate, yielding ADP-D-glycero-beta-D-manno-heptose. The sequence is that of Bifunctional protein HldE from Blochmanniella floridana.